Here is a 363-residue protein sequence, read N- to C-terminus: Phosphoserine aminotransferase (363 aa).

R42 contacts L-glutamate. Pyridoxal 5'-phosphate-binding positions include 76–77, W102, T156, D175, and Q198; that span reads GR. K199 is modified (N6-(pyridoxal phosphate)lysine). 240–241 provides a ligand contact to pyridoxal 5'-phosphate; that stretch reads NT.

It belongs to the class-V pyridoxal-phosphate-dependent aminotransferase family. SerC subfamily. Homodimer. Pyridoxal 5'-phosphate is required as a cofactor.

The protein resides in the cytoplasm. It carries out the reaction O-phospho-L-serine + 2-oxoglutarate = 3-phosphooxypyruvate + L-glutamate. The catalysed reaction is 4-(phosphooxy)-L-threonine + 2-oxoglutarate = (R)-3-hydroxy-2-oxo-4-phosphooxybutanoate + L-glutamate. It participates in amino-acid biosynthesis; L-serine biosynthesis; L-serine from 3-phospho-D-glycerate: step 2/3. The protein operates within cofactor biosynthesis; pyridoxine 5'-phosphate biosynthesis; pyridoxine 5'-phosphate from D-erythrose 4-phosphate: step 3/5. Its function is as follows. Catalyzes the reversible conversion of 3-phosphohydroxypyruvate to phosphoserine and of 3-hydroxy-2-oxo-4-phosphonooxybutanoate to phosphohydroxythreonine. This Shewanella sp. (strain ANA-3) protein is Phosphoserine aminotransferase.